Reading from the N-terminus, the 214-residue chain is Ribosomal RNA small subunit methyltransferase G (214 aa).

Residues Gly81, Met86, 132–133 (VE), and Arg147 contribute to the S-adenosyl-L-methionine site.

The protein belongs to the methyltransferase superfamily. RNA methyltransferase RsmG family.

The protein resides in the cytoplasm. The catalysed reaction is guanosine(527) in 16S rRNA + S-adenosyl-L-methionine = N(7)-methylguanosine(527) in 16S rRNA + S-adenosyl-L-homocysteine. Functionally, specifically methylates the N7 position of guanine in position 527 of 16S rRNA. This Ectopseudomonas mendocina (strain ymp) (Pseudomonas mendocina) protein is Ribosomal RNA small subunit methyltransferase G.